The primary structure comprises 364 residues: Tyrosyl-DNA phosphodiesterase 2 (364 aa).

The residue at position 1 (Met-1) is an N-acetylmethionine. Low complexity predominate over residues 1–10 (MERNSGPEAG). A disordered region spans residues 1–21 (MERNSGPEAGPEAELEEGEPE). Lys-23 participates in a covalent cross-link: Glycyl lysine isopeptide (Lys-Gly) (interchain with G-Cter in SUMO2). The interval 68–108 (ESASESRPESLSEPGSCVDLTKEETNDSISSKTSTSEDKSV) is disordered. 2 positions are modified to phosphothreonine; by ACVR1B: Thr-88 and Thr-92. Residue Ser-95 is modified to Phosphoserine. The interval 122-126 (NIDGL) is interaction with 5' end of substrate DNA. Positions 124 and 154 each coordinate Mg(2+). The interaction with 5' end of substrate DNA stretch occupies residues 228-233 (HLESTR). The Proton donor/acceptor role is filled by Asp-264. The segment at 266-268 (NLR) is interaction with 5' end of substrate DNA.

This sequence belongs to the CCR4/nocturin family. In terms of assembly, interacts with TRAF2, TRAF3, TRAF5, TRAF6, TNFRSF8/CD30, TNFRSF5/CD40, TNFRSF1B/TNF-R75, ETS1, ETS2, FLI1, SMAD3 and ACVR1B/ALK4. Requires Mg(2+) as cofactor. Mn(2+) is required as a cofactor. In terms of processing, ubiquitinated by TRAF6.

It localises to the nucleus. Its subcellular location is the PML body. The protein resides in the nucleolus. It is found in the cytoplasm. In terms of biological role, DNA repair enzyme that can remove a variety of covalent adducts from DNA through hydrolysis of a 5'-phosphodiester bond, giving rise to DNA with a free 5' phosphate. Catalyzes the hydrolysis of dead-end complexes between DNA and the topoisomerase 2 (TOP2) active site tyrosine residue. The 5'-tyrosyl DNA phosphodiesterase activity can enable the repair of TOP2-induced DNA double-strand breaks/DSBs without the need for nuclease activity, creating a 'clean' DSB with 5'-phosphate termini that are ready for ligation. Thereby, protects the transcription of many genes involved in neurological development and maintenance from the abortive activity of TOP2. Hydrolyzes 5'-phosphoglycolates on protruding 5' ends on DSBs due to DNA damage by radiation and free radicals. Has preference for single-stranded DNA or duplex DNA with a 4 base pair overhang as substrate. Also has 3'-tyrosyl DNA phosphodiesterase activity, but less efficiently and much slower than TDP1. Constitutes the major if not only 5'-tyrosyl-DNA phosphodiesterase in cells. Also acts as an adapter by participating in the specific activation of MAP3K7/TAK1 in response to TGF-beta: associates with components of the TGF-beta receptor-TRAF6-TAK1 signaling module and promotes their ubiquitination dependent complex formation. Involved in non-canonical TGF-beta induced signaling routes. May also act as a negative regulator of ETS1 and may inhibit NF-kappa-B activation. Acts as a regulator of ribosome biogenesis following stress. This is Tyrosyl-DNA phosphodiesterase 2 (TDP2) from Bos taurus (Bovine).